We begin with the raw amino-acid sequence, 234 residues long: tRNA (guanine-N(1)-)-methyltransferase (234 aa).

S-adenosyl-L-methionine is bound by residues Gly-112 and 132-137 (IGDFIL).

It belongs to the RNA methyltransferase TrmD family. As to quaternary structure, homodimer.

It localises to the cytoplasm. The catalysed reaction is guanosine(37) in tRNA + S-adenosyl-L-methionine = N(1)-methylguanosine(37) in tRNA + S-adenosyl-L-homocysteine + H(+). Specifically methylates guanosine-37 in various tRNAs. This is tRNA (guanine-N(1)-)-methyltransferase from Campylobacter jejuni subsp. doylei (strain ATCC BAA-1458 / RM4099 / 269.97).